Consider the following 364-residue polypeptide: Protein leg1a (364 aa).

The signal sequence occupies residues 1–22 (MSEMGFLRSVAAVLLLAVFSHA). N-linked (GlcNAc...) asparagine glycosylation is present at N70.

The protein belongs to the LEG1 family. As to expression, detected in all tissues tested, with the highest levels in serum (at protein level). At mRNA level, only expressed in liver.

The protein localises to the secreted. In terms of biological role, important for early development of liver, exocrine pancreas and intestine, probably through cell cycle regulation. In liver, its function is partially redundant with leg1b function. This Danio rerio (Zebrafish) protein is Protein leg1a.